The chain runs to 101 residues: Acylphosphatase-1 (101 aa).

The residue at position 2 (Ser-2) is an N-acetylserine. At Ser-2 the chain carries N-acetylalanine. In terms of domain architecture, Acylphosphatase-like spans 11-101; the sequence is SVDYEIFGKV…LDYTDFQIVK (91 aa). Catalysis depends on residues Arg-26 and Asn-44.

Belongs to the acylphosphatase family. Organ-common type isozyme is found in many different tissues.

It carries out the reaction an acyl phosphate + H2O = a carboxylate + phosphate + H(+). The chain is Acylphosphatase-1 (ACYP1) from Bos taurus (Bovine).